A 109-amino-acid chain; its full sequence is UPF0060 membrane protein RC1_3291 (109 aa).

The next 4 membrane-spanning stretches (helical) occupy residues 4–24 (IATY…FWAW), 31–51 (PLWL…LTRI), 59–79 (AYAA…WLVE), and 88–108 (TLGT…PRGG).

It belongs to the UPF0060 family.

The protein resides in the cell inner membrane. The chain is UPF0060 membrane protein RC1_3291 from Rhodospirillum centenum (strain ATCC 51521 / SW).